The following is a 235-amino-acid chain: Glycerol-3-phosphate acyltransferase (235 aa).

The next 6 membrane-spanning stretches (helical) occupy residues 4–24, 56–76, 90–110, 126–146, 152–172, and 191–211; these read LIVI…IIAG, AVTL…VVFF, VALR…TVFA, FGIA…TIFV, VASI…KYLF, and IHDS…FAII.

This sequence belongs to the PlsY family. Probably interacts with PlsX.

The protein localises to the cell inner membrane. It catalyses the reaction an acyl phosphate + sn-glycerol 3-phosphate = a 1-acyl-sn-glycero-3-phosphate + phosphate. It participates in lipid metabolism; phospholipid metabolism. Catalyzes the transfer of an acyl group from acyl-phosphate (acyl-PO(4)) to glycerol-3-phosphate (G3P) to form lysophosphatidic acid (LPA). This enzyme utilizes acyl-phosphate as fatty acyl donor, but not acyl-CoA or acyl-ACP. In Prosthecochloris aestuarii (strain DSM 271 / SK 413), this protein is Glycerol-3-phosphate acyltransferase.